A 379-amino-acid chain; its full sequence is Succinyl-diaminopimelate desuccinylase (379 aa).

His-70 lines the Zn(2+) pocket. Asp-72 is an active-site residue. Asp-103 is a Zn(2+) binding site. Glu-137 serves as the catalytic Proton acceptor. Positions 138, 166, and 352 each coordinate Zn(2+).

This sequence belongs to the peptidase M20A family. DapE subfamily. Homodimer. Zn(2+) is required as a cofactor. Requires Co(2+) as cofactor.

It carries out the reaction N-succinyl-(2S,6S)-2,6-diaminopimelate + H2O = (2S,6S)-2,6-diaminopimelate + succinate. Its pathway is amino-acid biosynthesis; L-lysine biosynthesis via DAP pathway; LL-2,6-diaminopimelate from (S)-tetrahydrodipicolinate (succinylase route): step 3/3. Catalyzes the hydrolysis of N-succinyl-L,L-diaminopimelic acid (SDAP), forming succinate and LL-2,6-diaminopimelate (DAP), an intermediate involved in the bacterial biosynthesis of lysine and meso-diaminopimelic acid, an essential component of bacterial cell walls. The sequence is that of Succinyl-diaminopimelate desuccinylase from Burkholderia cenocepacia (strain HI2424).